Reading from the N-terminus, the 436-residue chain is Proline transporter 3 (436 aa).

11 consecutive transmembrane segments (helical) span residues 29 to 49, 52 to 72, 118 to 138, 151 to 171, 172 to 192, 216 to 236, 254 to 274, 296 to 316, 345 to 365, 366 to 386, and 405 to 425; these read SWFQAAFVLTTSINSAYVLGY, TVMVPLGWIGGVVGLILATAI, LFMINCGFIILAGSALKAVYV, FIAIAGLICAVFAIGIPHLSA, LGIWLAVSTILSLIYIVVAIV, LFTITGAAATLVFVFNTGMLP, LYFQFTVGVLPMFAVVFIGYW, ALANISAILQSVISLHIFASP, GGYIAVSTLLSALLPFLGDFM, SLTGAVSTFPLTFILANHMYY, and VVFFSLMSVAAAIAALRLIAL.

Belongs to the amino acid/polyamine transporter 2 family. Amino acid/auxin permease (AAAP) (TC 2.A.18.3) subfamily. Expressed in epidermal cells of leaves, sepals and petals.

The protein localises to the cell membrane. Its function is as follows. Proline transporter that mediates proline and glycine betaine transport. When expressed in a heterologous system (yeast), imports L-proline, glycine betaine and GABA across the plasma membrane. The polypeptide is Proline transporter 3 (PROT3) (Arabidopsis thaliana (Mouse-ear cress)).